A 79-amino-acid polypeptide reads, in one-letter code: Serine rich endogenous peptide 2 (79 aa).

The signal sequence occupies residues 1–19; it reads MANNLGLVILLLVIVLVSC. The interval 25–79 is disordered; that stretch reads CALASPQKSRPSSEWRRKLIPVRSSRSPRSPSFAPKKPPPPPPSPPLSPSSPPSN. The SCOOP motif motif lies at 45–57; that stretch reads PVRSSRSPRSPSF. A compositionally biased stretch (low complexity) spans 45-59; the sequence is PVRSSRSPRSPSFAP. Positions 49 to 51 match the SxS motif essential for MIK2 binding motif; the sequence is SRS. Pro residues predominate over residues 60–79; sequence KKPPPPPPSPPLSPSSPPSN.

Belongs to the serine rich endogenous peptide (SCOOP) phytocytokine family. Interacts with MIK2 (via extracellular leucine-rich repeat domain); this interaction triggers the formation of complex between MIK2 and the BAK1/SERK3 and SERK4 coreceptors, and subsequent BAK1 activation by phosphorylation.

The protein localises to the cell membrane. It is found in the secreted. The protein resides in the extracellular space. It localises to the apoplast. In terms of biological role, brassicaceae-specific phytocytokine (plant endogenous peptide released into the apoplast) perceived by MIK2 in a BAK1/SERK3 and SERK4 coreceptors-dependent manner, that modulates various physiological and antimicrobial processes including growth prevention and reactive oxygen species (ROS) response regulation. This Arabidopsis thaliana (Mouse-ear cress) protein is Serine rich endogenous peptide 2.